We begin with the raw amino-acid sequence, 878 residues long: Phosphoenolpyruvate carboxylase (878 aa).

Active-site residues include H140 and K545.

It belongs to the PEPCase type 1 family. Mg(2+) is required as a cofactor.

It catalyses the reaction oxaloacetate + phosphate = phosphoenolpyruvate + hydrogencarbonate. In terms of biological role, forms oxaloacetate, a four-carbon dicarboxylic acid source for the tricarboxylic acid cycle. The chain is Phosphoenolpyruvate carboxylase from Ectopseudomonas mendocina (strain ymp) (Pseudomonas mendocina).